We begin with the raw amino-acid sequence, 1457 residues long: MDVAAAALPAFVALWLLYPWPLLGSALGQFSAGGCTFDDGPGACDYHQDLYDDFEWVHVSAQEPHYLPPEMPQGSYMVVDSSNHDPGEKARLQLPTMKENDTHCIDFSYLLYSQKGLNPGTLNILVRVNKGPLANPIWNVTGFTGRDWLRAELAVSTFWPNEYQVIFEAEVSGGRSGYIAIDDIQVLSYPCDKSPHFLRLGDVEVNAGQNATFQCIATGRDAVHNKLWLQRRNGEDIPVAQTKNINHRRFAASFRLQEVTKTDQDLYRCVTQSERGSGVSNFAQLIVREPPRPIAPPQLLGVGPTYLLIQLNANSIIGDGPIILKEVEYRMTSGSWTETHAVNAPTYKLWHLDPDTEYEIRVLLTRPGEGGTGLPGPPLITRTKCAEPMRTPKTLKIAEIQARRIAVDWESLGYNITRCHTFNVTICYHYFRGHNESRADCLDMDPKAPQHVVNHLPPYTNVSLKMILTNPEGRKESEETIIQTDEDVPGPVPVKSLQGTSFENKIFLNWKEPLEPNGIITQYEVSYSSIRSFDPAVPVAGPPQTVSNLWNSTHHVFMHLHPGTTYQFFIRASTVKGFGPATAINVTTNISAPSLPDYEGVDASLNETATTITVLLRPAQAKGAPISAYQIVVEQLHPHRTKREAGAMECYQVPVTYQNALSGGAPYYFAAELPPGNLPEPAPFTVGDNRTYKGFWNPPLAPRKGYNIYFQAMSSVEKETKTQCVRIATKAAATEEPEVIPDPAKQTDRVVKIAGISAGILVFILLLLVVIVIVKKSKLAKKRKDAMGNTRQEMTHMVNAMDRSYADQSTLHAEDPLSLTFMDQHNFSPRLPNDPLVPTAVLDENHSATAESSRLLDVPRYLCEGTESPYQTGQLHPAIRVADLLQHINLMKTSDSYGFKEEYESFFEGQSASWDVAKKDQNRAKNRYGNIIAYDHSRVILQPVEDDPSSDYINANYIDIWLYRDGYQRPSHYIATQGPVHETVYDFWRMVWQEQSACIVMVTNLVEVGRVKCYKYWPDDTEVYGDFKVTCVEMEPLAEYVVRTFTLERRGYNEIREVKQFHFTGWPDHGVPYHATGLLSFIRRVKLSNPPSAGPIVVHCSAGAGRTGCYIVIDIMLDMAEREGVVDIYNCVKALRSRRINMVQTEEQYIFIHDAILEACLCGETAIPVCEFKAAYFDMIRIDSQTNSSHLKDEFQTLNSVTPRLQAEDCSIACLPRNHDKNRFMDMLPPDRCLPFLITIDGESSNYINAALMDSYRQPAAFIVTQYPLPNTVKDFWRLVYDYGCTSIVMLNEVDLSQGCPQYWPEEGMLRYGPIQVECMSCSMDCDVINRIFRICNLTRPQEGYLMVQQFQYLGWASHREVPGSKRSFLKLILQVEKWQEECEEGEGRTIIHCLNGGGRSGMFCAIGIVVEMVKRQNVVDVFHAVKTLRNSKPNMVEAPEQYRFCYDVALEYLESS.

A signal peptide spans 1 to 25 (MDVAAAALPAFVALWLLYPWPLLGS). The Extracellular portion of the chain corresponds to 26–752 (ALGQFSAGGC…PAKQTDRVVK (727 aa)). The MAM domain maps to 30–193 (FSAGGCTFDD…IQVLSYPCDK (164 aa)). Asparagine 100, asparagine 139, and asparagine 210 each carry an N-linked (GlcNAc...) asparagine glycan. The Ig-like C2-type domain occupies 195–280 (PHFLRLGDVE…TQSERGSGVS (86 aa)). Cysteines 215 and 269 form a disulfide. 4 consecutive Fibronectin type-III domains span residues 293–388 (PIAP…CAEP), 391–487 (TPKT…TDED), 490–594 (GPVP…SAPS), and 595–688 (LPDY…TVGD). 9 N-linked (GlcNAc...) asparagine glycosylation sites follow: asparagine 415, asparagine 423, asparagine 435, asparagine 461, asparagine 551, asparagine 585, asparagine 589, asparagine 606, and asparagine 689. Residues 753-774 (IAGISAGILVFILLLLVVIVIV) traverse the membrane as a helical segment. Residues 775–1457 (KKSKLAKKRK…DVALEYLESS (683 aa)) lie on the Cytoplasmic side of the membrane. At serine 868 the chain carries Phosphoserine. Tyrosine-protein phosphatase domains lie at 899–1159 (FKEE…ILEA) and 1191–1453 (LKDE…ALEY). Substrate is bound by residues aspartate 1068, 1100–1106 (CSAGAGR), and glutamine 1144. The active-site Phosphocysteine intermediate is the cysteine 1100. Cysteine 1394 (phosphocysteine intermediate) is an active-site residue.

This sequence belongs to the protein-tyrosine phosphatase family. Receptor class 2B subfamily. This protein undergoes proteolytic processing. As to expression, high levels in liver and kidney. Lower levels in lung, brain and heart. Not seen in spleen and testis.

It localises to the membrane. The enzyme catalyses O-phospho-L-tyrosyl-[protein] + H2O = L-tyrosyl-[protein] + phosphate. In terms of biological role, regulation of processes involving cell contact and adhesion such as growth control, tumor invasion, and metastasis. Negative regulator of EGFR signaling pathway. Forms complexes with beta-catenin and gamma-catenin/plakoglobin. Beta-catenin may be a substrate for the catalytic activity of PTPRK/PTP-kappa. The sequence is that of Receptor-type tyrosine-protein phosphatase kappa (Ptprk) from Mus musculus (Mouse).